Here is a 161-residue protein sequence, read N- to C-terminus: MQTIEQQITNVIEESLTDMGFELVLVKFKGVNPKVVEILIDSLNGEKISVEDCTKASRTISAILDVEDLIEDAYSLEVASSGLERPLVKFENYNRFLGREVKIKLKELLNGKTRYQGKIIKAKNNKIYLKCEEQEVLIDYDLIKNANLVLTEEVFKKLLKQ.

Belongs to the RimP family.

Its subcellular location is the cytoplasm. Its function is as follows. Required for maturation of 30S ribosomal subunits. The chain is Ribosome maturation factor RimP from Rickettsia felis (strain ATCC VR-1525 / URRWXCal2) (Rickettsia azadi).